We begin with the raw amino-acid sequence, 509 residues long: 2,3-bisphosphoglycerate-independent phosphoglycerate mutase (509 aa).

Mn(2+) is bound by residues aspartate 14 and serine 64. Serine 64 acts as the Phosphoserine intermediate in catalysis. Substrate-binding positions include histidine 125, 155-156 (RD), arginine 187, arginine 193, 259-262 (RADR), and lysine 332. Residues aspartate 399, histidine 403, aspartate 440, histidine 441, and histidine 459 each contribute to the Mn(2+) site.

It belongs to the BPG-independent phosphoglycerate mutase family. As to quaternary structure, monomer. It depends on Mn(2+) as a cofactor.

It carries out the reaction (2R)-2-phosphoglycerate = (2R)-3-phosphoglycerate. The protein operates within carbohydrate degradation; glycolysis; pyruvate from D-glyceraldehyde 3-phosphate: step 3/5. In terms of biological role, catalyzes the interconversion of 2-phosphoglycerate and 3-phosphoglycerate. The polypeptide is 2,3-bisphosphoglycerate-independent phosphoglycerate mutase (Aeromonas salmonicida (strain A449)).